We begin with the raw amino-acid sequence, 482 residues long: F-box/LRR-repeat protein At3g58930 (482 aa).

Residues 1–47 (MDRVSNLPDGVRGHILSFLPAKHIALTSVLSKSWLNLWKLIPILDID) enclose the F-box domain. LRR repeat units follow at residues 122–150 (SYED…KIRN), 175–200 (SDLI…RMAS), 222–248 (GTGC…NYSD), 313–344 (ILYL…GIKS), and 345–370 (EEGR…IIEG).

This Arabidopsis thaliana (Mouse-ear cress) protein is F-box/LRR-repeat protein At3g58930.